A 544-amino-acid polypeptide reads, in one-letter code: MAAKEVKFGNEARIKMLEGVNILADAVKVTLGPKGRNVVLDKSFGAPTITKDGVSVAREIELEDKFQNMGAQMVKEVASKANDAAGDGTTTATVLAQAIVNEGLKAVAAGMNPMDLKRGIDKAVIAAVAELQVLSQPCADNNAIAQVGTISANSDEKVGRLIAEAMDKVGRDGVITVEDGQGLDDELAVVEGMQFDRGYLSPYFVNKPETGAVELDDPFILLVDKKVSNIREMLPVLEGVAKAGKPLLIVAEDVEGEALATLVVNTMRGIVKVAAVKAPGFGDRRKAMLQDIAMLTSGGTVIEEVGMELEKATLEDLGRAKRIVITKENTTIIDGVGDAALIESRVAQIRQQIEETSSDYDREKLQERVAKLAGGVAVIKVGAATEVEMKEKKARVDDALHATRAAVEEGVVAGGGVALVRVAAKLAGLRGDNEDQNVGIKVALRAMEAPLRQIVINAGEEASVIANAVKNGEGNFGYNAYTEQYGDMLAMGILDPTKVTRSALQFASSIAGLMITTECMITELPKKDTPAMPDMGGMGGMGMM.

Residues 30–33 (TLGP), Lys-51, 87–91 (DGTTT), Gly-415, and Asp-495 contribute to the ATP site.

The protein belongs to the chaperonin (HSP60) family. Forms a cylinder of 14 subunits composed of two heptameric rings stacked back-to-back. Interacts with the co-chaperonin GroES.

The protein resides in the cytoplasm. It carries out the reaction ATP + H2O + a folded polypeptide = ADP + phosphate + an unfolded polypeptide.. Its function is as follows. Together with its co-chaperonin GroES, plays an essential role in assisting protein folding. The GroEL-GroES system forms a nano-cage that allows encapsulation of the non-native substrate proteins and provides a physical environment optimized to promote and accelerate protein folding. In Aeromonas salmonicida, this protein is Chaperonin GroEL.